A 79-amino-acid chain; its full sequence is Sulfur carrier protein TusA (79 aa).

C17 functions as the Cysteine persulfide intermediate in the catalytic mechanism.

The protein belongs to the sulfur carrier protein TusA family.

The protein localises to the cytoplasm. Its function is as follows. Sulfur carrier protein which probably makes part of a sulfur-relay system. The sequence is that of Sulfur carrier protein TusA from Pasteurella multocida (strain Pm70).